The chain runs to 52 residues: Alpha-crystallin B chain (52 aa).

Belongs to the small heat shock protein (HSP20) family. In terms of assembly, homodimer. Aggregates with homologous proteins, including alpha-A-crystallin and the small heat shock protein HSPB1, to form large heteromeric complexes.

May contribute to the transparency and refractive index of the lens. This Trachemys scripta elegans (Red-eared slider turtle) protein is Alpha-crystallin B chain (CRYAB).